The sequence spans 148 residues: Cytochrome c-type biogenesis protein CcmE (148 aa).

Residues 1 to 7 are Cytoplasmic-facing; it reads MKARNKR. A helical; Signal-anchor for type II membrane protein membrane pass occupies residues 8-28; the sequence is LMLVGGGIALLVAAAALVLSA. Topologically, residues 29–148 are periplasmic; sequence FQQNLVFFHT…AHKTATTVQQ (120 aa). 2 residues coordinate heme: H123 and Y127.

This sequence belongs to the CcmE/CycJ family.

It is found in the cell inner membrane. Functionally, heme chaperone required for the biogenesis of c-type cytochromes. Transiently binds heme delivered by CcmC and transfers the heme to apo-cytochromes in a process facilitated by CcmF and CcmH. This is Cytochrome c-type biogenesis protein CcmE from Azoarcus sp. (strain BH72).